Consider the following 333-residue polypeptide: Phosphate acyltransferase (333 aa).

The protein belongs to the PlsX family. Homodimer. Probably interacts with PlsY.

The protein resides in the cytoplasm. It carries out the reaction a fatty acyl-[ACP] + phosphate = an acyl phosphate + holo-[ACP]. The protein operates within lipid metabolism; phospholipid metabolism. In terms of biological role, catalyzes the reversible formation of acyl-phosphate (acyl-PO(4)) from acyl-[acyl-carrier-protein] (acyl-ACP). This enzyme utilizes acyl-ACP as fatty acyl donor, but not acyl-CoA. The sequence is that of Phosphate acyltransferase from Ligilactobacillus salivarius (strain UCC118) (Lactobacillus salivarius).